The primary structure comprises 196 residues: Interleukin-18 (196 aa).

Positions 1–29 (MSCEEIAVCAVRLRENLCLYFEELECDAF) are excised as a propeptide.

It belongs to the IL-1 family. Forms a ternary complex with ligand-binding receptor subunit IL18R1 and signaling receptor subunit IL18RAP at the plasma membrane. Mature IL18 first binds to IL18R1 forming a low affinity binary complex, which then interacts with IL18RAP to form a high affinity ternary complex that signals inside the cell. Interacts with cargo receptor TMED10; the interaction mediates the translocation from the cytoplasm into the ERGIC (endoplasmic reticulum-Golgi intermediate compartment) and thereby secretion. In terms of processing, the pro-IL-18 precursor is processed by CASP1 or CASP4 to yield the active form.

It localises to the cytoplasm. It is found in the secreted. Its function is as follows. Augments natural killer cell activity in spleen cells and stimulates interferon gamma production in T-helper type I cells. Involved in transduction of inflammation downstream of pyroptosis: its mature form is specifically released in the extracellular milieu by passing through the gasdermin-D (GSDMD) pore. The polypeptide is Interleukin-18 (IL18) (Gallus gallus (Chicken)).